Here is a 757-residue protein sequence, read N- to C-terminus: Glutathione biosynthesis bifunctional protein GshAB (757 aa).

The segment at 1 to 337 (MKIQHIIHEN…LGKARLAEVA (337 aa)) is glutamate--cysteine ligase. In terms of domain architecture, ATP-grasp spans 494 to 753 (KKVLQKAGFN…LTQNVIKMLF (260 aa)). ATP is bound at residue 521–580 (ALFENRAVVIKPKSTNYGLGITIFQQGVQNREDFAKALEIAFREDKEVMVEDYLVGTEYR). Asp702, Glu723, and Asn725 together coordinate Mg(2+). Asp702, Glu723, and Asn725 together coordinate Mn(2+).

In the N-terminal section; belongs to the glutamate--cysteine ligase type 1 family. Type 2 subfamily. As to quaternary structure, monomer. Mg(2+) serves as cofactor. Requires Mn(2+) as cofactor.

It carries out the reaction L-cysteine + L-glutamate + ATP = gamma-L-glutamyl-L-cysteine + ADP + phosphate + H(+). It catalyses the reaction gamma-L-glutamyl-L-cysteine + glycine + ATP = glutathione + ADP + phosphate + H(+). It participates in sulfur metabolism; glutathione biosynthesis; glutathione from L-cysteine and L-glutamate: step 1/2. The protein operates within sulfur metabolism; glutathione biosynthesis; glutathione from L-cysteine and L-glutamate: step 2/2. Functionally, synthesizes glutathione from L-glutamate and L-cysteine via gamma-L-glutamyl-L-cysteine. This chain is Glutathione biosynthesis bifunctional protein GshAB, found in Pasteurella multocida (strain Pm70).